The following is a 372-amino-acid chain: F-box/kelch-repeat protein At2g44630 (372 aa).

Polar residues predominate over residues 1–13 (MSNADEPPQKTNQ). A disordered region spans residues 1–21 (MSNADEPPQKTNQPPSSSLTP). Residues 21 to 67 (PPSLFSLPVDIVLNILALVPKRYYPILCCVSKSLRSLIRSPEIHKTR) form the F-box domain. 2 Kelch repeats span residues 136–181 (EIYC…LVGG) and 183–228 (IYVI…SVSL).

The chain is F-box/kelch-repeat protein At2g44630 from Arabidopsis thaliana (Mouse-ear cress).